We begin with the raw amino-acid sequence, 512 residues long: ATP synthase subunit alpha 2 (512 aa).

ATP is bound at residue 169–176 (GDRQTGKT).

The protein belongs to the ATPase alpha/beta chains family. F-type ATPases have 2 components, CF(1) - the catalytic core - and CF(0) - the membrane proton channel. CF(1) has five subunits: alpha(3), beta(3), gamma(1), delta(1), epsilon(1). CF(0) has four main subunits: a(1), b(1), b'(1) and c(9-12).

It localises to the cell inner membrane. The catalysed reaction is ATP + H2O + 4 H(+)(in) = ADP + phosphate + 5 H(+)(out). Produces ATP from ADP in the presence of a proton gradient across the membrane. The alpha chain is a regulatory subunit. In Dinoroseobacter shibae (strain DSM 16493 / NCIMB 14021 / DFL 12), this protein is ATP synthase subunit alpha 2.